The primary structure comprises 163 residues: Small heat shock protein C1 (163 aa).

Positions 55 to 163 (TFYESSSLKS…EQDSREITIN (109 aa)) constitute a sHSP domain.

It belongs to the small heat shock protein (HSP20) family.

This chain is Small heat shock protein C1 (hspC1), found in Rickettsia prowazekii (strain Madrid E).